Here is a 171-residue protein sequence, read N- to C-terminus: Disulfide bond formation protein B (171 aa).

The Cytoplasmic segment spans residues 1–13 (MTFISNLADTRLA). A helical transmembrane segment spans residues 14 to 30 (WGLLFLSALVLVAYALF). Over 31–48 (SQHAMGLQPCIMCIYQRT) the chain is Periplasmic. Cysteine 40 and cysteine 43 are oxidised to a cystine. Residues 49 to 63 (AIFGIMFACVPVLAA) traverse the membrane as a helical segment. The Cytoplasmic portion of the chain corresponds to 64–70 (NNMLTRL). The helical transmembrane segment at 71 to 88 (FAFTVWGISAIWGGLIAW) threads the bilayer. Residues 89 to 144 (EHYDIQNAANPFFATCEIVPNFPSWLPLHEWLPNLFAATGDCGNIDWVFMDMSMPQ) are Periplasmic-facing. Cysteine 104 and cysteine 130 are oxidised to a cystine. A helical transmembrane segment spans residues 145 to 163 (WMMVVFAIYSSIWFVVLAS). Residues 164–171 (RLIGNRAI) lie on the Cytoplasmic side of the membrane.

The protein belongs to the DsbB family.

It is found in the cell inner membrane. Functionally, required for disulfide bond formation in some periplasmic proteins. Acts by oxidizing the DsbA protein. In Pseudoalteromonas atlantica (strain T6c / ATCC BAA-1087), this protein is Disulfide bond formation protein B.